Reading from the N-terminus, the 458-residue chain is Exodeoxyribonuclease 7 large subunit (458 aa).

This sequence belongs to the XseA family. In terms of assembly, heterooligomer composed of large and small subunits.

The protein resides in the cytoplasm. The catalysed reaction is Exonucleolytic cleavage in either 5'- to 3'- or 3'- to 5'-direction to yield nucleoside 5'-phosphates.. Its function is as follows. Bidirectionally degrades single-stranded DNA into large acid-insoluble oligonucleotides, which are then degraded further into small acid-soluble oligonucleotides. This chain is Exodeoxyribonuclease 7 large subunit, found in Serratia proteamaculans (strain 568).